Consider the following 225-residue polypeptide: Cyclin-dependent kinase inhibitor 3 (225 aa).

2 disordered regions span residues 47–94 (AAAA…QRRR) and 130–169 (ERKS…PLSP). Residues 55–67 (CRRRHRRGGRRGC) show a composition bias toward basic residues. Over residues 71 to 82 (GAGSARACGARS) the composition is skewed to low complexity. Basic and acidic residues predominate over residues 143-153 (VAAEHAGEHKH).

This sequence belongs to the CDI family. ICK/KRP subfamily.

This is Cyclin-dependent kinase inhibitor 3 (KRP3) from Oryza sativa subsp. japonica (Rice).